A 226-amino-acid chain; its full sequence is Octanoyltransferase (226 aa).

Positions Leu-34 to Phe-212 constitute a BPL/LPL catalytic domain. Substrate-binding positions include Arg-76–His-83, Ala-143–Gly-145, and Gly-156–Ala-158. The Acyl-thioester intermediate role is filled by Cys-174.

The protein belongs to the LipB family.

It is found in the cytoplasm. It carries out the reaction octanoyl-[ACP] + L-lysyl-[protein] = N(6)-octanoyl-L-lysyl-[protein] + holo-[ACP] + H(+). Its pathway is protein modification; protein lipoylation via endogenous pathway; protein N(6)-(lipoyl)lysine from octanoyl-[acyl-carrier-protein]: step 1/2. Its function is as follows. Catalyzes the transfer of endogenously produced octanoic acid from octanoyl-acyl-carrier-protein onto the lipoyl domains of lipoate-dependent enzymes. Lipoyl-ACP can also act as a substrate although octanoyl-ACP is likely to be the physiological substrate. This is Octanoyltransferase from Thermosynechococcus vestitus (strain NIES-2133 / IAM M-273 / BP-1).